The chain runs to 417 residues: Gamma-glutamyl phosphate reductase (417 aa).

Belongs to the gamma-glutamyl phosphate reductase family.

The protein localises to the cytoplasm. It carries out the reaction L-glutamate 5-semialdehyde + phosphate + NADP(+) = L-glutamyl 5-phosphate + NADPH + H(+). It participates in amino-acid biosynthesis; L-proline biosynthesis; L-glutamate 5-semialdehyde from L-glutamate: step 2/2. Catalyzes the NADPH-dependent reduction of L-glutamate 5-phosphate into L-glutamate 5-semialdehyde and phosphate. The product spontaneously undergoes cyclization to form 1-pyrroline-5-carboxylate. This Haemophilus influenzae (strain PittGG) protein is Gamma-glutamyl phosphate reductase.